The following is a 427-amino-acid chain: Histidine--tRNA ligase (427 aa).

This sequence belongs to the class-II aminoacyl-tRNA synthetase family. As to quaternary structure, homodimer.

The protein localises to the cytoplasm. The enzyme catalyses tRNA(His) + L-histidine + ATP = L-histidyl-tRNA(His) + AMP + diphosphate + H(+). This Lacticaseibacillus casei (strain BL23) (Lactobacillus casei) protein is Histidine--tRNA ligase.